The sequence spans 459 residues: Cysteine--tRNA ligase (459 aa).

Cysteine 28 serves as a coordination point for Zn(2+). A 'HIGH' region motif is present at residues 30-40 (ITIYDLCHIGH). Zn(2+) contacts are provided by cysteine 209, histidine 234, and glutamate 238. The short motif at 266 to 270 (KMSKS) is the 'KMSKS' region element. Lysine 269 contributes to the ATP binding site.

This sequence belongs to the class-I aminoacyl-tRNA synthetase family. As to quaternary structure, monomer. Zn(2+) is required as a cofactor.

The protein resides in the cytoplasm. The enzyme catalyses tRNA(Cys) + L-cysteine + ATP = L-cysteinyl-tRNA(Cys) + AMP + diphosphate. The sequence is that of Cysteine--tRNA ligase from Shewanella denitrificans (strain OS217 / ATCC BAA-1090 / DSM 15013).